A 791-amino-acid polypeptide reads, in one-letter code: Splicing factor 3A subunit 1 (791 aa).

The disordered stretch occupies residues 1-41 (MQAGPVQAVPPPPPVATESKQPIEEEASSKEDPTPSKPVVG). K20 is covalently cross-linked (Glycyl lysine isopeptide (Lys-Gly) (interchain with G-Cter in SUMO2)). Residues 21–34 (QPIEEEASSKEDPT) are compositionally biased toward basic and acidic residues. An SURP motif 1 repeat occupies 52–94 (IVDKTASFVARNGPEFEARIRQNEINNPKFNFLNPNDPYHAYY). Residue K55 is modified to N6-acetyllysine. Residue K131 forms a Glycyl lysine isopeptide (Lys-Gly) (interchain with G-Cter in SUMO2) linkage. One copy of the SURP motif 2 repeat lies at 166–208 (VVKLTAQFVARNGRQFLTQLMQKEQRNYQFDFLRPQHSLFNYF). The interval 318–411 (GESEEVEMEV…APAPDEYLVS (94 aa)) is disordered. 2 positions are modified to phosphoserine: S320 and S329. Residues 320–336 (SEEVEMEVESDEEDQEK) show a composition bias toward acidic residues. The segment covering 340–351 (TPSQLDQDTQVQ) has biased composition (polar residues). The span at 352–362 (DMDEGSDDEEE) shows a compositional bias: acidic residues. Residue S357 is modified to Phosphoserine. The segment covering 366 to 382 (VPPPPETPMPPPLPPTP) has biased composition (pro residues). Residues 386–395 (IVRKDYDPKA) show a composition bias toward basic and acidic residues. Residue S411 is modified to Phosphoserine. K422 is covalently cross-linked (Glycyl lysine isopeptide (Lys-Gly) (interchain with G-Cter in SUMO2)). S449 carries the post-translational modification Phosphoserine. Residue Y454 is modified to Phosphotyrosine. Over residues 486–500 (IGEEEIQKPEEKVTW) the composition is skewed to basic and acidic residues. 3 disordered regions span residues 486-516 (IGEEEIQKPEEKVTWDGHSGSMARTQQAAQA), 528-582 (HKAK…AMPP), and 664-684 (PMPPVHPPPPMEDEPPSKKLK). K497 participates in a covalent cross-link: Glycyl lysine isopeptide (Lys-Gly) (interchain with G-Cter in SUMO2). S506 is modified (phosphoserine). The span at 507 to 516 (MARTQQAAQA) shows a compositional bias: polar residues. K540 is covalently cross-linked (Glycyl lysine isopeptide (Lys-Gly) (interchain with G-Cter in SUMO2)). Polar residues predominate over residues 561-570 (ATNIPSSAPP). Residues 664–673 (PMPPVHPPPP) show a composition bias toward pro residues. The tract at residues 678–700 (PPSKKLKTEDSLMPEEEFLRRNK) is required and sufficient for nuclear import. K684 is covalently cross-linked (Glycyl lysine isopeptide (Lys-Gly) (interchain with G-Cter in SUMO2)). The Ubiquitin-like domain maps to 705-788 (IKVQVPNMQD…IHLALKERGG (84 aa)). Y757 carries the phosphotyrosine modification.

In terms of assembly, component of the 17S U2 SnRNP complex, a ribonucleoprotein complex that contains small nuclear RNA (snRNA) U2 and a number of specific proteins. Part of the SF3A subcomplex of the 17S U2 SnRNP complex which is composed of three subunits; SF3A3/SAP61, SF3A2/SAP62 and SF3A1/SAP114. SF3A associates with the splicing factor SF3B and a 12S RNA unit to form the mature 17S U2 small nuclear ribonucleoprotein complex (17S U2 snRNP). SF3A1 functions as a scaffold that interacts directly with both SF3A2 and SF3A3. Identified in the spliceosome 'E' complex, a precursor of the spliceosome 'A' complex. Identified in the spliceosome 'A' and 'B' complexes. Identified in the spliceosome 'C' complex. Interacts with P2RX6; resulting in a reduction of the splicing activity.

It is found in the nucleus. The protein localises to the nucleus speckle. Component of the 17S U2 SnRNP complex of the spliceosome, a large ribonucleoprotein complex that removes introns from transcribed pre-mRNAs. The 17S U2 SnRNP complex (1) directly participates in early spliceosome assembly and (2) mediates recognition of the intron branch site during pre-mRNA splicing by promoting the selection of the pre-mRNA branch-site adenosine, the nucleophile for the first step of splicing. Within the 17S U2 SnRNP complex, SF3A1 is part of the SF3A subcomplex that contributes to the assembly of the 17S U2 snRNP, and the subsequent assembly of the pre-spliceosome 'E' complex and the pre-catalytic spliceosome 'A' complex. Involved in pre-mRNA splicing as a component of pre-catalytic spliceosome 'B' complexes. The sequence is that of Splicing factor 3A subunit 1 (Sf3a1) from Mus musculus (Mouse).